The chain runs to 192 residues: UPF0312 protein Pput_4854 (192 aa).

A signal peptide spans 1-23 (MLKKTFAALALGTALLSAGQAMA).

It belongs to the UPF0312 family. Type 1 subfamily.

Its subcellular location is the periplasm. The protein is UPF0312 protein Pput_4854 of Pseudomonas putida (strain ATCC 700007 / DSM 6899 / JCM 31910 / BCRC 17059 / LMG 24140 / F1).